The sequence spans 185 residues: Alkyl hydroperoxide reductase AhpD (185 aa).

Cysteine 132 functions as the Proton donor in the catalytic mechanism. A disulfide bridge connects residues cysteine 132 and cysteine 135. Catalysis depends on cysteine 135, which acts as the Cysteine sulfenic acid (-SOH) intermediate.

Belongs to the AhpD family.

It carries out the reaction N(6)-[(R)-dihydrolipoyl]-L-lysyl-[lipoyl-carrier protein] + a hydroperoxide = N(6)-[(R)-lipoyl]-L-lysyl-[lipoyl-carrier protein] + an alcohol + H2O. Its function is as follows. Antioxidant protein with alkyl hydroperoxidase activity. Required for the reduction of the AhpC active site cysteine residues and for the regeneration of the AhpC enzyme activity. In Anaeromyxobacter sp. (strain Fw109-5), this protein is Alkyl hydroperoxide reductase AhpD.